The following is a 264-amino-acid chain: Teichoic acids export ATP-binding protein TagH (264 aa).

An ABC transporter domain is found at 5–243; it reads VNIKNVTKEY…YEAFLNDFKK (239 aa). Residue 57–64 participates in ATP binding; sequence GINGSGKS.

This sequence belongs to the ABC transporter superfamily. Teichoic acids exporter (TC 3.A.1.104.1) family. In terms of assembly, the complex is composed of two ATP-binding proteins (TagH) and two transmembrane proteins (TagG).

It localises to the cell membrane. It catalyses the reaction ATP + H2O + teichoic acidSide 1 = ADP + phosphate + teichoic acidSide 2.. Functionally, part of the ABC transporter complex TagGH involved in teichoic acids export. Responsible for energy coupling to the transport system. In Staphylococcus aureus (strain USA300), this protein is Teichoic acids export ATP-binding protein TagH.